The chain runs to 278 residues: Short-chain dehydrogenase RED2 (278 aa).

NADP(+) contacts are provided by Ile-15, Asp-70, Arg-132, Tyr-178, Lys-182, Val-211, and Thr-213. Catalysis depends on Tyr-178, which acts as the Proton donor. Lys-182 acts as the Lowers pKa of active site Tyr in catalysis.

The protein belongs to the short-chain dehydrogenases/reductases (SDR) family.

The protein operates within polyketide biosynthesis. Its function is as follows. Short-chain dehydrogenase; part of the gene cluster that mediates the biosynthesis of pyriculol and pyriculariol, two heptaketides that induce lesion formation upon application on rice leaves but are dispensable for pathogenicity. The highly reducing polyketide synthase synthesizes the heptaketide backbone of pyriculol and pyriculariol. Pyriculol and pyriculariol contain several hydroxyl moieties and double bonds, so it can be assumed that several reduction steps occur during biosynthesis. These reactions could be executed by PKS19 itself or partly by the tailoring enzymes OXR1, OXR2, RED1, RED2 or RED3, identified within the cluster. The FAD-linked oxidoreductase OXR1 is the only tailoring enzyme for which the function has been determined yet, and is involved in the oxidation of dihydropyriculol and dihydropyriculariol into pyriculol and pyriculariol, respectively. The protein is Short-chain dehydrogenase RED2 of Pyricularia oryzae (strain 70-15 / ATCC MYA-4617 / FGSC 8958) (Rice blast fungus).